The chain runs to 315 residues: Phosphatidylglycerol--prolipoprotein diacylglyceryl transferase (315 aa).

2 helical membrane-spanning segments follow: residues 19-39 (FTIH…VWIL) and 93-113 (VWEG…VAFL). Arg141 contacts a 1,2-diacyl-sn-glycero-3-phospho-(1'-sn-glycerol). Helical transmembrane passes span 188–208 (LFHP…ALII) and 256–276 (MWTA…LYQY).

The protein belongs to the Lgt family.

It is found in the cell membrane. The catalysed reaction is L-cysteinyl-[prolipoprotein] + a 1,2-diacyl-sn-glycero-3-phospho-(1'-sn-glycerol) = an S-1,2-diacyl-sn-glyceryl-L-cysteinyl-[prolipoprotein] + sn-glycerol 1-phosphate + H(+). Its pathway is protein modification; lipoprotein biosynthesis (diacylglyceryl transfer). Functionally, catalyzes the transfer of the diacylglyceryl group from phosphatidylglycerol to the sulfhydryl group of the N-terminal cysteine of a prolipoprotein, the first step in the formation of mature lipoproteins. This chain is Phosphatidylglycerol--prolipoprotein diacylglyceryl transferase, found in Bifidobacterium longum subsp. infantis (strain ATCC 15697 / DSM 20088 / JCM 1222 / NCTC 11817 / S12).